Reading from the N-terminus, the 49-residue chain is MRVGVTLACTECKRRNYTTAKNKKNDPNRIELKKYCKWCHTHTVHKETR.

This sequence belongs to the bacterial ribosomal protein bL33 family.

In Desulforamulus reducens (strain ATCC BAA-1160 / DSM 100696 / MI-1) (Desulfotomaculum reducens), this protein is Large ribosomal subunit protein bL33.